Reading from the N-terminus, the 413-residue chain is Unsaturated 3S-rhamnoglycuronyl hydrolase (413 aa).

The first 21 residues, 1–21, serve as a signal peptide directing secretion; sequence MNHTKLKLSAVALTLALGLSA. A lipid anchor (N-palmitoyl cysteine) is attached at C22. Residue C22 is the site of S-diacylglycerol cysteine attachment. The active-site Proton donor is D203.

Belongs to the glycosyl hydrolase 105 family.

Its subcellular location is the cell membrane. Its function is as follows. Glucuronyl hydrolase involved in ulvan degradation. Ulvan is the main polysaccharide component of the Ulvales (green seaweed) cell wall. It is composed of disaccharide building blocks comprising 3-sulfated rhamnose (Rha3S) linked to D-glucuronic acid (GlcA), L-iduronic acid (IduA), or D-xylose (Xyl). Unsaturated 3S-rhamnoglycuronyl hydrolase works together with ulvan lyases to fully degrade the ulvan polymer, catalyzing specifically the cleavage of the unsaturated 4-deoxy-L-threo-hex-4-enopyranosiduronic acid (deltaUA) of the deltaUA-oligosaccharides deltaUA-Rha3S, deltaUA-Rha3S-IduA-Rha3S and deltaUA-Rha3S-Xyl-Rha3S, the end products of the ulvan lyase reaction. In Alteromonas sp. (strain LOR), this protein is Unsaturated 3S-rhamnoglycuronyl hydrolase.